A 205-amino-acid chain; its full sequence is MQMTLVPYVVEDTGRGERAMDIYSRLLKDRIVMIGQEITEPLANTVIAQLLFLMSEDPKKDIKVFINSPGGYITAGLAIYDTIRFLGCDVNTYCIGQAASMGALLLSAGTKGKRYALPHSRMMIHQPSGGIIGTSADIQLQAAEILTLKKHLANILSECTGQPVEKIIEDSERDFFMGAEDAISYGLIDKVVSSAKDTKDKDTIS.

Residue serine 100 is the Nucleophile of the active site. Residue histidine 125 is part of the active site.

It belongs to the peptidase S14 family. In terms of assembly, fourteen ClpP subunits assemble into 2 heptameric rings which stack back to back to give a disk-like structure with a central cavity, resembling the structure of eukaryotic proteasomes.

Its subcellular location is the cytoplasm. The catalysed reaction is Hydrolysis of proteins to small peptides in the presence of ATP and magnesium. alpha-casein is the usual test substrate. In the absence of ATP, only oligopeptides shorter than five residues are hydrolyzed (such as succinyl-Leu-Tyr-|-NHMec, and Leu-Tyr-Leu-|-Tyr-Trp, in which cleavage of the -Tyr-|-Leu- and -Tyr-|-Trp bonds also occurs).. In terms of biological role, cleaves peptides in various proteins in a process that requires ATP hydrolysis. Has a chymotrypsin-like activity. Plays a major role in the degradation of misfolded proteins. The chain is ATP-dependent Clp protease proteolytic subunit 2 from Chlamydia abortus (strain DSM 27085 / S26/3) (Chlamydophila abortus).